We begin with the raw amino-acid sequence, 343 residues long: N-acetyl-gamma-glutamyl-phosphate reductase (343 aa).

The active site involves cysteine 149.

The protein belongs to the NAGSA dehydrogenase family. Type 1 subfamily.

Its subcellular location is the cytoplasm. The catalysed reaction is N-acetyl-L-glutamate 5-semialdehyde + phosphate + NADP(+) = N-acetyl-L-glutamyl 5-phosphate + NADPH + H(+). It functions in the pathway amino-acid biosynthesis; L-arginine biosynthesis; N(2)-acetyl-L-ornithine from L-glutamate: step 3/4. Its function is as follows. Catalyzes the NADPH-dependent reduction of N-acetyl-5-glutamyl phosphate to yield N-acetyl-L-glutamate 5-semialdehyde. In Methanococcus maripaludis (strain C6 / ATCC BAA-1332), this protein is N-acetyl-gamma-glutamyl-phosphate reductase.